Reading from the N-terminus, the 357-residue chain is Peptide chain release factor 1 (357 aa).

An N5-methylglutamine modification is found at Gln-234. The interval 283–313 (SKKQEQRSSNRKQQVGSGDRSERIRTYNFPQ) is disordered.

It belongs to the prokaryotic/mitochondrial release factor family. Methylated by PrmC. Methylation increases the termination efficiency of RF1.

It is found in the cytoplasm. Peptide chain release factor 1 directs the termination of translation in response to the peptide chain termination codons UAG and UAA. The chain is Peptide chain release factor 1 (prfA) from Borreliella burgdorferi (strain ATCC 35210 / DSM 4680 / CIP 102532 / B31) (Borrelia burgdorferi).